We begin with the raw amino-acid sequence, 487 residues long: Protein nucleotidyltransferase YdiU (487 aa).

Positions 90, 92, 93, 113, 125, 126, 176, and 183 each coordinate ATP. The Proton acceptor role is filled by Asp252. Positions 253 and 262 each coordinate Mg(2+). Asp262 contacts ATP.

It belongs to the SELO family. Mg(2+) is required as a cofactor. Mn(2+) serves as cofactor.

The enzyme catalyses L-seryl-[protein] + ATP = 3-O-(5'-adenylyl)-L-seryl-[protein] + diphosphate. The catalysed reaction is L-threonyl-[protein] + ATP = 3-O-(5'-adenylyl)-L-threonyl-[protein] + diphosphate. It catalyses the reaction L-tyrosyl-[protein] + ATP = O-(5'-adenylyl)-L-tyrosyl-[protein] + diphosphate. It carries out the reaction L-histidyl-[protein] + UTP = N(tele)-(5'-uridylyl)-L-histidyl-[protein] + diphosphate. The enzyme catalyses L-seryl-[protein] + UTP = O-(5'-uridylyl)-L-seryl-[protein] + diphosphate. The catalysed reaction is L-tyrosyl-[protein] + UTP = O-(5'-uridylyl)-L-tyrosyl-[protein] + diphosphate. Its function is as follows. Nucleotidyltransferase involved in the post-translational modification of proteins. It can catalyze the addition of adenosine monophosphate (AMP) or uridine monophosphate (UMP) to a protein, resulting in modifications known as AMPylation and UMPylation. The protein is Protein nucleotidyltransferase YdiU of Azotobacter vinelandii (strain DJ / ATCC BAA-1303).